We begin with the raw amino-acid sequence, 425 residues long: MTKALDGVRVLDFTHVQSGPTCTQLLAWFGADVIKVERPGSGDITRGQLQDIPKVDSLYFTMLNHNKRSITLDTKNPKGKEVLTALIRTCDVLVENFGPGVLDRMGFTWEKIQEINPRMIVASIKGFGPGPYEDCKVYENVAQCTGGAASTTGFREGLPLVTGAQIGDSGTGLHLALGIVTALYQRHHTGRGQRVTAAMQDGVLNLCRVKLRDQQRLDHGPLKEYSQFGEGIPFGDAVPRAGNDSGGGQPGRILKCKGWEQDPNAYIYVITQAPVWEKICDVIGETGWKMHPDYATPPARLSRLNEIFARIEQWTMTKTKFEAMEILNADDIPCGPILSMKELAEDQSLRATGTIVEVDHPTRGKYLSVGNPIKLSDSPTEVKRSPLLGEHTDEILRDVLGYSDAHVAEIHDSGATAPPRKQAAE.

Residues 17-18 (QS), Arg38, 72-75 (LDTK), 96-98 (NFG), Arg104, and 136-139 (KVYE) each bind CoA. Catalysis depends on Asp168, which acts as the Nucleophile. 247–249 (GGQ) provides a ligand contact to substrate.

Belongs to the CoA-transferase III family. Frc subfamily. In terms of assembly, homodimer.

It carries out the reaction formyl-CoA + oxalate = oxalyl-CoA + formate. It functions in the pathway metabolic intermediate degradation; oxalate degradation; CO(2) and formate from oxalate: step 1/2. Functionally, involved in the catabolism of oxalate and in the adapatation to low pH via the induction of the oxalate-dependent acid tolerance response (ATR). Catalyzes the transfer of the CoA moiety from formyl-CoA to oxalate. The polypeptide is Formyl-CoA:oxalate CoA-transferase (Rhodopseudomonas palustris (strain TIE-1)).